A 121-amino-acid polypeptide reads, in one-letter code: Basic phospholipase A2 (121 aa).

7 disulfides stabilise this stretch: Cys26/Cys114, Cys28/Cys44, Cys43/Cys94, Cys49/Cys121, Cys50/Cys87, Cys57/Cys80, and Cys74/Cys85. Ca(2+) is bound by residues Tyr27, Gly29, and Gly31. His47 is an active-site residue. Asp48 is a binding site for Ca(2+). Residue Asp88 is part of the active site.

In terms of assembly, homopentamer. Requires Ca(2+) as cofactor. As to expression, expressed by the venom gland.

It is found in the secreted. The enzyme catalyses a 1,2-diacyl-sn-glycero-3-phosphocholine + H2O = a 1-acyl-sn-glycero-3-phosphocholine + a fatty acid + H(+). Functionally, snake venom phospholipase A2 (PLA2) that displays moderate myotoxic activity in vivo, and cytotoxic activity in vitro. In vitro, shows anticoagulant activity on human plasma and in mice causes inflammatory cell infiltration and myonecrosis in the gastrocnemius muscles of CD-1 mice 3 hours after injection (100 ug). PLA2 catalyzes the calcium-dependent hydrolysis of the 2-acyl groups in 3-sn-phosphoglycerides. The chain is Basic phospholipase A2 from Porthidium ophryomegas (Slender hognose viper).